Reading from the N-terminus, the 583-residue chain is Dynein axonemal assembly factor 3 (583 aa).

Residues Arg-455–Ala-534 are disordered.

It belongs to the DNAAF3 family.

It is found in the cytoplasm. The protein localises to the dynein axonemal particle. Functionally, required for the assembly of axonemal inner and outer dynein arms. Involved in preassembly of dyneins into complexes before their transport into cilia. The chain is Dynein axonemal assembly factor 3 (Dnaaf3) from Rattus norvegicus (Rat).